The following is a 273-amino-acid chain: 4-hydroxy-tetrahydrodipicolinate reductase (273 aa).

An NAD(+)-binding site is contributed by 12 to 17; that stretch reads GANGRM. Arginine 39 is an NADP(+) binding site. NAD(+) is bound by residues 102 to 104 and 126 to 129; these read GTT and AANF. Histidine 159 functions as the Proton donor/acceptor in the catalytic mechanism. Histidine 160 is a binding site for (S)-2,3,4,5-tetrahydrodipicolinate. The active-site Proton donor is the lysine 163. 169 to 170 lines the (S)-2,3,4,5-tetrahydrodipicolinate pocket; it reads GT.

The protein belongs to the DapB family. Homotetramer.

It is found in the cytoplasm. The enzyme catalyses (S)-2,3,4,5-tetrahydrodipicolinate + NAD(+) + H2O = (2S,4S)-4-hydroxy-2,3,4,5-tetrahydrodipicolinate + NADH + H(+). The catalysed reaction is (S)-2,3,4,5-tetrahydrodipicolinate + NADP(+) + H2O = (2S,4S)-4-hydroxy-2,3,4,5-tetrahydrodipicolinate + NADPH + H(+). It participates in amino-acid biosynthesis; L-lysine biosynthesis via DAP pathway; (S)-tetrahydrodipicolinate from L-aspartate: step 4/4. Functionally, catalyzes the conversion of 4-hydroxy-tetrahydrodipicolinate (HTPA) to tetrahydrodipicolinate. The polypeptide is 4-hydroxy-tetrahydrodipicolinate reductase (Cronobacter sakazakii (strain ATCC BAA-894) (Enterobacter sakazakii)).